We begin with the raw amino-acid sequence, 685 residues long: Tripartite terminase subunit 1 (685 aa).

A C3H1-type zinc finger spans residues 173-201 (CWRCVGELMVLPNHGNPSTAEGTHVSCNH). Disordered regions lie at residues 231-254 (EEKARPGGPEEGAVPGPGRPEAEG) and 394-423 (LGRGEEEASRESPEVPRPAGAREPGPSGAL). Positions 395-407 (GRGEEEASRESPE) are enriched in basic and acidic residues. 619-626 (YNKTWGRS) serves as a coordination point for ATP.

It belongs to the herpesviridae TRM1 protein family. In terms of assembly, associates with TRM2 and TRM3 to form the tripartite terminase complex. Interacts with portal protein.

It localises to the host nucleus. In terms of biological role, component of the molecular motor that translocates viral genomic DNA in empty capsid during DNA packaging. Forms a tripartite terminase complex together with TRM2 and TRM3 in the host cytoplasm. Once the complex reaches the host nucleus, it interacts with the capsid portal vertex. This portal forms a ring in which genomic DNA is translocated into the capsid. TRM1 carries an endonuclease activity that plays an important role for the cleavage of concatemeric viral DNA into unit length genomes. This is Tripartite terminase subunit 1 from Epstein-Barr virus (strain B95-8) (HHV-4).